A 274-amino-acid polypeptide reads, in one-letter code: Diaminopimelate epimerase (274 aa).

The substrate site is built by Asn-11, Gln-44, and Asn-64. Cys-73 acts as the Proton donor in catalysis. Substrate is bound by residues 74–75 (GN), Asn-157, Asn-190, and 208–209 (ER). The active-site Proton acceptor is Cys-217. Residue 218–219 (GS) coordinates substrate.

This sequence belongs to the diaminopimelate epimerase family. As to quaternary structure, homodimer.

The protein resides in the cytoplasm. It carries out the reaction (2S,6S)-2,6-diaminopimelate = meso-2,6-diaminopimelate. It functions in the pathway amino-acid biosynthesis; L-lysine biosynthesis via DAP pathway; DL-2,6-diaminopimelate from LL-2,6-diaminopimelate: step 1/1. Functionally, catalyzes the stereoinversion of LL-2,6-diaminopimelate (L,L-DAP) to meso-diaminopimelate (meso-DAP), a precursor of L-lysine and an essential component of the bacterial peptidoglycan. The polypeptide is Diaminopimelate epimerase (Escherichia coli O127:H6 (strain E2348/69 / EPEC)).